Reading from the N-terminus, the 485-residue chain is UDP-glycosyltransferase 71B2 (485 aa).

Residues Ser287, 354–356 (APQ), 371–379 (HCGWNSTLE), and 393–396 (YAEQ) contribute to the UDP-alpha-D-glucose site.

It belongs to the UDP-glycosyltransferase family.

Functionally, glucosyltransferase that glucosylates the cell wall inhibitor hypostatin in vivo to form a bioactive glucoside. The polypeptide is UDP-glycosyltransferase 71B2 (UGT71B2) (Arabidopsis thaliana (Mouse-ear cress)).